Reading from the N-terminus, the 345-residue chain is L-threonine 3-dehydrogenase (345 aa).

C38 is a Zn(2+) binding site. Catalysis depends on charge relay system residues T40 and H43. H63, E64, C93, C96, C99, and C107 together coordinate Zn(2+). NAD(+) is bound by residues I176, D196, R201, 263–265 (LGT), and 287–288 (VT).

Belongs to the zinc-containing alcohol dehydrogenase family. Homotetramer. Zn(2+) serves as cofactor.

It is found in the cytoplasm. It catalyses the reaction L-threonine + NAD(+) = (2S)-2-amino-3-oxobutanoate + NADH + H(+). It participates in amino-acid degradation; L-threonine degradation via oxydo-reductase pathway; glycine from L-threonine: step 1/2. Functionally, catalyzes the NAD(+)-dependent oxidation of L-threonine to 2-amino-3-ketobutyrate. This Cutibacterium acnes (strain DSM 16379 / KPA171202) (Propionibacterium acnes) protein is L-threonine 3-dehydrogenase.